We begin with the raw amino-acid sequence, 548 residues long: Probable zinc metalloprotease EGY1, chloroplastic (548 aa).

A chloroplast-targeting transit peptide spans 1–18; it reads MGTLTSVAFAAAVNIRFR. Over residues 61-76 the composition is skewed to basic and acidic residues; sequence NSNRDDSIGENGETHK. The interval 61–116 is disordered; it reads NSNRDDSIGENGETHKSSVVKTATFEEEDEETSKSSSTTSSSNEFGSDKTSMPSTI. The span at 103–116 shows a compositional bias: polar residues; it reads NEFGSDKTSMPSTI. 8 helical membrane-spanning segments follow: residues 242–262, 290–310, 326–346, 361–381, 388–408, 416–436, 474–494, and 516–536; these read YVIA…LGIA, LYPF…ILLF, LSIP…ITQF, LAGP…GLFL, ANDL…LGLI, AALH…WCGL, MLGL…YVLI, and ALVG…WDEL.

This sequence belongs to the peptidase M50B family. In terms of tissue distribution, expressed in roots, leaves, cotyledons, hypocotyls, stems, flowers and siliques.

The protein localises to the plastid. It is found in the chloroplast membrane. Functionally, membrane-associated and ATP-independent metalloprotease required for development of both thylakoid grana and well-organized lamellae in chloroplast. Required for the accumulation of chlorophyll and chlorophyll a/b binding (CAB) proteins (from both PS I and PS II) in chloroplast membranes, and for grana formation and normal chloroplast development. Involved in the regulation of nuclear gene expression in response to ammonium stress and interacts with ABA signaling. Carries out beta-casein degradation in an ATP-independent manner in vitro. The protein is Probable zinc metalloprotease EGY1, chloroplastic (EGY1) of Arabidopsis thaliana (Mouse-ear cress).